Reading from the N-terminus, the 177-residue chain is MSSAPNASALMKIGQLKKPYGIKGWLWVFSETDDRTAIFDIKPWWMKTATGMKPLTVKAWRQQGTGVVAQFEQIPDRNVAETMNGVTLWVEQDILPEPAEDEYYWSDLVTLRVINEQDEYLGDITEMFETGAHAIMRVAATSDSLDKEERLIPWHKQTVVKVDLTEKTVLVAWPSDY.

A PRC barrel domain is found at 100–177 (EDEYYWSDLV…TVLVAWPSDY (78 aa)).

The protein belongs to the RimM family. As to quaternary structure, binds ribosomal protein uS19.

It localises to the cytoplasm. An accessory protein needed during the final step in the assembly of 30S ribosomal subunit, possibly for assembly of the head region. Essential for efficient processing of 16S rRNA. May be needed both before and after RbfA during the maturation of 16S rRNA. It has affinity for free ribosomal 30S subunits but not for 70S ribosomes. In Psychrobacter arcticus (strain DSM 17307 / VKM B-2377 / 273-4), this protein is Ribosome maturation factor RimM.